We begin with the raw amino-acid sequence, 230 residues long: Protein FAM3A (230 aa).

The first 33 residues, 1–33 (MRLAGPLRIVALVVSVGLTWIVVSILLGGPGSG), serve as a signal peptide directing secretion. Intrachain disulfides connect C59/C87 and C65/C222. Residues 68 to 226 (EHLAFRVVSG…LEMEGCIPRR (159 aa)) form the GG-type lectin domain.

The protein belongs to the FAM3 family.

It localises to the secreted. The polypeptide is Protein FAM3A (FAM3A) (Pongo abelii (Sumatran orangutan)).